The chain runs to 403 residues: Nucleoporin nup44 (403 aa).

2 stretches are compositionally biased toward polar residues: residues 1-31 (MAFS…TTKP) and 67-124 (FGKT…DETN). Residues 1-124 (MAFSFGQQGS…NPTKPVDETN (124 aa)) are disordered.

It localises to the cytoplasm. The protein localises to the nucleus. In terms of biological role, functions as a component of the nuclear pore complex (NPC). NPC components, collectively referred to as nucleoporins (NUPs), can play the role of both NPC structural components and of docking or interaction partners for transiently associated nuclear transport factors. Active directional transport is assured by both, a Phe-Gly (FG) repeat affinity gradient for these transport factors across the NPC and a transport cofactor concentration gradient across the nuclear envelope. This Schizosaccharomyces pombe (strain 972 / ATCC 24843) (Fission yeast) protein is Nucleoporin nup44 (nup44).